Consider the following 904-residue polypeptide: Alanine--tRNA ligase (904 aa).

Zn(2+) is bound by residues histidine 603, histidine 607, cysteine 707, and histidine 711.

It belongs to the class-II aminoacyl-tRNA synthetase family. Requires Zn(2+) as cofactor.

It localises to the cytoplasm. The enzyme catalyses tRNA(Ala) + L-alanine + ATP = L-alanyl-tRNA(Ala) + AMP + diphosphate. Its function is as follows. Catalyzes the attachment of alanine to tRNA(Ala) in a two-step reaction: alanine is first activated by ATP to form Ala-AMP and then transferred to the acceptor end of tRNA(Ala). Also edits incorrectly charged Ser-tRNA(Ala) and Gly-tRNA(Ala) via its editing domain. This is Alanine--tRNA ligase from Sulfurisphaera tokodaii (strain DSM 16993 / JCM 10545 / NBRC 100140 / 7) (Sulfolobus tokodaii).